We begin with the raw amino-acid sequence, 630 residues long: Telomere repeat-binding protein 5 (630 aa).

3 disordered regions span residues 1-38 (MVLQ…SENH), 56-78 (EGGN…CAVK), and 308-327 (YTAS…GSPR). The span at 57-71 (GGNSSSSSNNTSGNN) shows a compositional bias: low complexity. Residues 309-325 (TASQSEETNKNEGQSGS) are compositionally biased toward polar residues. Positions 354–433 (VKLGIKSFRV…SDTLGFCLEP (80 aa)) constitute a Ubiquitin-like domain. Positions 463–489 (LPSPGKHAKPSNSVESDLDSKPSAPNR) are disordered. The region spanning 523–582 (AQRRIRRPFSVAEVEALVQAVERLGTGRWRDVKLRAFDNAKHRTYVDLKDKWKTLVHTAR) is the HTH myb-type domain. The segment at residues 551 to 578 (WRDVKLRAFDNAKHRTYVDLKDKWKTLV) is a DNA-binding region (H-T-H motif).

As to quaternary structure, homodimer. Expressed ubiquitously.

The protein resides in the nucleus. Functionally, binds specifically to the plant telomeric double-stranded DNA sequences. At least 6 repeats of telomeric sequences are required for binding. The chain is Telomere repeat-binding protein 5 (TRP5) from Arabidopsis thaliana (Mouse-ear cress).